The sequence spans 346 residues: Biotin synthase (346 aa).

The Radical SAM core domain maps to 36–265 (YFGRQVMLHR…KAEIRIGGGR (230 aa)). Residues Cys-54, Cys-58, and Cys-61 each contribute to the [4Fe-4S] cluster site. Cys-98, Cys-130, Cys-190, and Arg-260 together coordinate [2Fe-2S] cluster.

Belongs to the radical SAM superfamily. Biotin synthase family. Homodimer. Requires [4Fe-4S] cluster as cofactor. [2Fe-2S] cluster is required as a cofactor.

It catalyses the reaction (4R,5S)-dethiobiotin + (sulfur carrier)-SH + 2 reduced [2Fe-2S]-[ferredoxin] + 2 S-adenosyl-L-methionine = (sulfur carrier)-H + biotin + 2 5'-deoxyadenosine + 2 L-methionine + 2 oxidized [2Fe-2S]-[ferredoxin]. It participates in cofactor biosynthesis; biotin biosynthesis; biotin from 7,8-diaminononanoate: step 2/2. In terms of biological role, catalyzes the conversion of dethiobiotin (DTB) to biotin by the insertion of a sulfur atom into dethiobiotin via a radical-based mechanism. In Acaryochloris marina (strain MBIC 11017), this protein is Biotin synthase.